Reading from the N-terminus, the 548-residue chain is GLC7-interacting protein 2 (548 aa).

The span at 1-23 (MYIKAEQKPQQFERKNEKLDRNK) shows a compositional bias: basic and acidic residues. Disordered regions lie at residues 1–54 (MYIK…STEE) and 118–143 (VESLNGSTRPPFKIELPPLSPKSTVP). A Phosphoserine modification is found at S51. Phosphothreonine is present on T52. S155 carries the phosphoserine modification. Residues 191-212 (RSKSLPTTPGIRSGNGVQARDG) form a disordered region. Phosphoserine is present on residues S221 and S238. A disordered region spans residues 293 to 346 (FAHPAKISNPNNGKGTNNTKLRKSKRFQNLLKNRTDMPPSKSNKKFVNGGGAHE). A CBM21 domain is found at 419–534 (HNGNDCNGVA…NNNGNNYKVD (116 aa)).

In terms of assembly, interacts with phosphatase 1 (GLC7).

This Saccharomyces cerevisiae (strain ATCC 204508 / S288c) (Baker's yeast) protein is GLC7-interacting protein 2 (GIP2).